Here is a 206-residue protein sequence, read N- to C-terminus: Ribonuclease HII (206 aa).

Residues 27–206 (ARIAGVDEAG…CALHRRSFKH (180 aa)) form the RNase H type-2 domain. The a divalent metal cation site is built by D33, E34, and D125.

Belongs to the RNase HII family. Mn(2+) is required as a cofactor. It depends on Mg(2+) as a cofactor.

The protein resides in the cytoplasm. It catalyses the reaction Endonucleolytic cleavage to 5'-phosphomonoester.. In terms of biological role, endonuclease that specifically degrades the RNA of RNA-DNA hybrids. The chain is Ribonuclease HII from Moorella thermoacetica (strain ATCC 39073 / JCM 9320).